A 551-amino-acid chain; its full sequence is Chaperonin GroEL (551 aa).

ATP is bound by residues 30-33 (TLGP), Lys-51, 87-91 (DGTTT), Gly-415, 481-483 (NAA), and Asp-497.

Belongs to the chaperonin (HSP60) family. In terms of assembly, forms a cylinder of 14 subunits composed of two heptameric rings stacked back-to-back. Interacts with the co-chaperonin GroES.

The protein localises to the cytoplasm. It carries out the reaction ATP + H2O + a folded polypeptide = ADP + phosphate + an unfolded polypeptide.. In terms of biological role, together with its co-chaperonin GroES, plays an essential role in assisting protein folding. The GroEL-GroES system forms a nano-cage that allows encapsulation of the non-native substrate proteins and provides a physical environment optimized to promote and accelerate protein folding. This Magnetococcus marinus (strain ATCC BAA-1437 / JCM 17883 / MC-1) protein is Chaperonin GroEL.